We begin with the raw amino-acid sequence, 86 residues long: Small ribosomal subunit protein bS20 (86 aa).

Residues 1–11 (MANIKQQKKRN) show a composition bias toward basic residues. Positions 1–21 (MANIKQQKKRNKTNEKRRLQN) are disordered.

The protein belongs to the bacterial ribosomal protein bS20 family.

Binds directly to 16S ribosomal RNA. The polypeptide is Small ribosomal subunit protein bS20 (Onion yellows phytoplasma (strain OY-M)).